Reading from the N-terminus, the 398-residue chain is Alpha-2,8-sialyltransferase 8F (398 aa).

Over Met-1–Pro-3 the chain is Cytoplasmic. Residues Gly-4–Trp-24 traverse the membrane as a helical; Signal-anchor for type II membrane protein segment. Residues Cys-25–Ala-398 are Lumenal-facing. N-linked (GlcNAc...) asparagine glycosylation is found at Asn-66, Asn-93, Asn-151, and Asn-196. 2 disulfide bridges follow: Cys-186–Cys-335 and Cys-200–Cys-395. Substrate is bound by residues Asn-214, Asn-236 to Ser-238, and Ser-322 to Gly-324. Residue His-370 is the Proton donor/acceptor of the active site.

It belongs to the glycosyltransferase 29 family.

It localises to the golgi apparatus membrane. The catalysed reaction is a ganglioside GM3 + CMP-N-acetyl-beta-neuraminate = a ganglioside GD3 + CMP + H(+). It catalyses the reaction a ganglioside GM3 (d18:1(4E)) + CMP-N-acetyl-beta-neuraminate = a ganglioside GD3 (d18:1(4E)) + CMP + H(+). The enzyme catalyses a ganglioside GD1a (d18:1(4E)) + CMP-N-acetyl-beta-neuraminate = a ganglioside GT1a (d18:1(4E)) + CMP + H(+). It carries out the reaction a ganglioside GD1a + CMP-N-acetyl-beta-neuraminate = a ganglioside GT1a + CMP + H(+). The catalysed reaction is a ganglioside GM1b (d18:1(4E)) + CMP-N-acetyl-beta-neuraminate = a ganglioside GD1c (d18:1(4E)) + CMP + H(+). It catalyses the reaction a ganglioside GM1b + CMP-N-acetyl-beta-neuraminate = a ganglioside GD1c + CMP + H(+). The enzyme catalyses a ganglioside GM4 (d18:1(4E)) + CMP-N-acetyl-beta-neuraminate = an N-acetyl-alpha-neuraminosyl-(2-&gt;8)-N-acetyl-alpha-neuraminosyl-(2-&gt;3)-beta-D-galactosyl-(1&lt;-&gt;1')-N-acylsphing-4-enine + CMP + H(+). It carries out the reaction N-acetyl-alpha-neuraminosyl-(2-&gt;3)-beta-D-galactosyl-(1&lt;-&gt;1')-ceramide + CMP-N-acetyl-beta-neuraminate = N-acetyl-alpha-neuraminosyl-(2-&gt;8)-N-acetyl-alpha-neuraminosyl-(2-&gt;3)-beta-D-galactosyl-(1&lt;-&gt;1')-ceramide + CMP + H(+). The catalysed reaction is a ganglioside GT1b (d18:1(4E)) + CMP-N-acetyl-beta-neuraminate = a ganglioside GQ1b (d18:1(4E)) + CMP + H(+). It catalyses the reaction a ganglioside GT1b + CMP-N-acetyl-beta-neuraminate = a ganglioside GQ1b + CMP + H(+). It participates in protein modification; protein glycosylation. Its function is as follows. Alpha-2,8-sialyltransferase that prefers O-glycans to N-glycans or glycolipids as acceptor substrates. The minimal acceptor substrate is the NeuAc-alpha-2,3(6)-Gal sequence at the non-reducing end of their carbohydrate groups. In Pan troglodytes (Chimpanzee), this protein is Alpha-2,8-sialyltransferase 8F (ST8SIA6).